Here is a 317-residue protein sequence, read N- to C-terminus: Acetyl-coenzyme A carboxylase carboxyl transferase subunit alpha (317 aa).

Residues 40–294 (RLQKKSEELT…KARLLTDLED (255 aa)) form the CoA carboxyltransferase C-terminal domain.

It belongs to the AccA family. In terms of assembly, acetyl-CoA carboxylase is a heterohexamer composed of biotin carboxyl carrier protein (AccB), biotin carboxylase (AccC) and two subunits each of ACCase subunit alpha (AccA) and ACCase subunit beta (AccD).

The protein localises to the cytoplasm. The catalysed reaction is N(6)-carboxybiotinyl-L-lysyl-[protein] + acetyl-CoA = N(6)-biotinyl-L-lysyl-[protein] + malonyl-CoA. Its pathway is lipid metabolism; malonyl-CoA biosynthesis; malonyl-CoA from acetyl-CoA: step 1/1. Its function is as follows. Component of the acetyl coenzyme A carboxylase (ACC) complex. First, biotin carboxylase catalyzes the carboxylation of biotin on its carrier protein (BCCP) and then the CO(2) group is transferred by the carboxyltransferase to acetyl-CoA to form malonyl-CoA. The chain is Acetyl-coenzyme A carboxylase carboxyl transferase subunit alpha from Actinobacillus succinogenes (strain ATCC 55618 / DSM 22257 / CCUG 43843 / 130Z).